The chain runs to 794 residues: Protein sel-1 homolog 1 (794 aa).

The N-terminal stretch at 1–21 (MRVRIGLTLLLCAVLLSLASA) is a signal peptide. Positions 21–50 (ASSDEEGSQDESLDSKTTLTSDESVKDHTT) are disordered. Residues 22 to 737 (SSDEEGSQDE…DMFTQLDMDQ (716 aa)) are interaction with ERLEC1, OS9 and SYVN1. Over 22 to 738 (SSDEEGSQDE…MFTQLDMDQL (717 aa)) the chain is Lumenal. Positions 23 to 32 (SDEEGSQDES) are enriched in acidic residues. Ser63 carries the phosphoserine modification. A compositionally biased stretch (acidic residues) spans 64–77 (EESELESSIQEEED). The disordered stretch occupies residues 64–109 (EESELESSIQEEEDSLKSQEGESVTEDISFLESPNPENKDYEEPKK). Residues 122 to 170 (AHGEPCHFPFLFLDKEYDECTSDGREDGRLWCATTYDYKADEKWGFCET) enclose the Fibronectin type-II domain. 2 disulfides stabilise this stretch: Cys127–Cys153 and Cys141–Cys168. Sel1-like repeat units follow at residues 183-218 (AEMM…SMNH), 219-254 (TKAL…EEGS), 255-290 (PKGQ…LGGN), 291-326 (LIAH…NHVA), 373-409 (VQAQ…NAGN), 410-446 (SHAM…DMGN), 447-482 (PVGQ…EQGW), 483-518 (VDGQ…QGGH), and 519-554 (ILAF…ERGR). N-linked (GlcNAc...) asparagine glycans are attached at residues Asn195 and Asn217. A glycan (N-linked (GlcNAc...) asparagine) is linked at Asn272. Residues 352 to 537 (NSGMLEEDLI…MHASGTGVMR (186 aa)) form an important for homodimerization and oligomerization region. Asn431 is a glycosylation site (N-linked (GlcNAc...) asparagine). N-linked (GlcNAc...) asparagine glycosylation occurs at Asn608. Sel1-like repeat units follow at residues 627-662 (TVAR…EQQH) and 664-699 (AQAM…EASP). The interval 643–723 (TDVDYETAFI…VVYFLQYIRE (81 aa)) is interaction with SYVN1. The segment at 738 to 794 (LLGPEWDLYLMTIIALLLGTVIAYRQRQHQDMPAPRPPGPRPAPPQQEGPPEQQPPQ) is mediates retention in the endoplasmic reticulum. A helical transmembrane segment spans residues 739-759 (LGPEWDLYLMTIIALLLGTVI). Topologically, residues 760–794 (AYRQRQHQDMPAPRPPGPRPAPPQQEGPPEQQPPQ) are cytoplasmic. Residues 766–794 (HQDMPAPRPPGPRPAPPQQEGPPEQQPPQ) are disordered. The segment covering 771–794 (APRPPGPRPAPPQQEGPPEQQPPQ) has biased composition (pro residues).

The protein belongs to the sel-1 family. Homodimer and homooligomer. May form a complex with ERLEC1, HSPA5, OS9, and SYVN1. Interacts with FOXRED2 and EDEM1. Interacts with LPL. Interacts with LMF1; may stabilize the complex formed by LPL and LMF1 and thereby promote the export of LPL dimers. Component of the HRD1 complex, which comprises at least SYNV1/HRD1, DERL1/2, FAM8A1, HERPUD1/HERP, OS9, SEL1L and UBE2J1. SYNV1 assembles with SEL1L and FAM8A1 through its transmembrane domains, but interaction with its cytoplasmic domain is required to confer stability to FAM8A1 and enhance recruitment of HERPUD1. The interaction with SYNV1/HRD1 is direct. In terms of assembly, (Microbial infection) Interacts with human cytomegalovirus protein UL148. N-glycosylated. As to expression, highly expressed in pancreas.

Its subcellular location is the endoplasmic reticulum membrane. Its function is as follows. Plays a role in the endoplasmic reticulum quality control (ERQC) system also called ER-associated degradation (ERAD) involved in ubiquitin-dependent degradation of misfolded endoplasmic reticulum proteins. Enhances SYVN1 stability. Plays a role in LPL maturation and secretion. Required for normal differentiation of the pancreas epithelium, and for normal exocrine function and survival of pancreatic cells. May play a role in Notch signaling. This chain is Protein sel-1 homolog 1, found in Homo sapiens (Human).